Consider the following 242-residue polypeptide: Probable transcriptional regulatory protein Dred_1658 (242 aa).

It belongs to the TACO1 family.

Its subcellular location is the cytoplasm. The sequence is that of Probable transcriptional regulatory protein Dred_1658 from Desulforamulus reducens (strain ATCC BAA-1160 / DSM 100696 / MI-1) (Desulfotomaculum reducens).